The following is a 353-amino-acid chain: uncharacterized protein (353 aa).

This is an uncharacterized protein from Archaeoglobus fulgidus (strain ATCC 49558 / DSM 4304 / JCM 9628 / NBRC 100126 / VC-16).